A 130-amino-acid chain; its full sequence is DNA-directed RNA polymerase subunit omega (130 aa).

Disordered stretches follow at residues 80 to 99 (PEPD…DADD) and 110 to 130 (EELL…EEDE). The segment covering 110–124 (EELLKGLEGLAPREE) has biased composition (basic and acidic residues).

Belongs to the RNA polymerase subunit omega family. In terms of assembly, the RNAP catalytic core consists of 2 alpha, 1 beta, 1 beta' and 1 omega subunit. When a sigma factor is associated with the core the holoenzyme is formed, which can initiate transcription.

It catalyses the reaction RNA(n) + a ribonucleoside 5'-triphosphate = RNA(n+1) + diphosphate. Functionally, promotes RNA polymerase assembly. Latches the N- and C-terminal regions of the beta' subunit thereby facilitating its interaction with the beta and alpha subunits. The polypeptide is DNA-directed RNA polymerase subunit omega (Nitrobacter hamburgensis (strain DSM 10229 / NCIMB 13809 / X14)).